The following is a 424-amino-acid chain: PDZ and LIM domain protein 7 (424 aa).

Residues 1–85 (MDSFKVVLEG…RLSLSLSRAQ (85 aa)) enclose the PDZ domain. Serine 78 carries the phosphoserine modification. Residues 81-98 (LSRAQPAQSKPQKVQTPD) are compositionally biased toward polar residues. Residues 81–221 (LSRAQPAQSK…HTQPATPTPM (141 aa)) form a disordered region. Threonine 96 carries the phosphothreonine modification. Positions 110-123 (SKQRLMEDTEDWRP) are enriched in basic and acidic residues. Positions 174–187 (EPWPGPTTPSPTSR) are enriched in pro residues. Over residues 204–221 (KTSTVLTRHTQPATPTPM) the composition is skewed to polar residues. LIM zinc-binding domains follow at residues 247-305 (PVCH…VRYA), 306-365 (PSCA…MFGT), and 366-424 (KCRG…FSHV).

In terms of assembly, binds via its LIM zinc-binding 3 domain (LIM 3) domain to endocytic codes of INSR, but not with those of IGF1R, LDLR, TFRC, or EGFR. Interacts with various PKC isoforms through the LIM zinc-binding domains. Binds to RET in a phosphorylation-independent manner via its LIM zinc-binding 2 domain (LIM 2). Probably part of a complex with SHC and the RET dimer. Interacts with TPM2, TBX4 and TBX5.

The protein localises to the cytoplasm. Its subcellular location is the cytoskeleton. Functionally, may function as a scaffold on which the coordinated assembly of proteins can occur. May play a role as an adapter that, via its PDZ domain, localizes LIM-binding proteins to actin filaments of both skeletal muscle and nonmuscle tissues. Involved in both of the two fundamental mechanisms of bone formation, direct bone formation (e.g. embryonic flat bones mandible and cranium), and endochondral bone formation (e.g. embryonic long bone development). Plays a role during fracture repair. Involved in BMP6 signaling pathway. The chain is PDZ and LIM domain protein 7 (PDLIM7) from Bos taurus (Bovine).